The primary structure comprises 478 residues: MLILRQFQISSFELFQSPKQTGFYSSSRSVPLPRTRFYSDFRVMSGNKGTNYEKLYLGMDFGTSGGRFTVIDEQGEIKAQGKREYPPFMKEESMGWASSWKATLFSLLEDIPVTVRSLVSSISLDGTSATTLILNSESGEVLCQPYLYNQSCPDALPEVKSIAPANHTVCSGTSTLCKLVSWWNTEVPNRESAVLLHQADWLLWLLHGRLGVSDYNNALKVGYDPESESYPSWLLGQPYSQLLPKVQAPGTSIGNLKESFTRQFGFPDDCIVCTGTTDSIAAFLAARATEPGKAVTSLGSTLAIKLLSTKRVDDARYGVYSHRLDDKWLVGGASNTGGAILRQLFSDEQLERLSQEINPMVGSPLDYYPLQSSGERFPIADPNLAPRLLPRPESDVEFLHGILESIARIEGKGYKLLKELGATEAEEVLTAGGGAKNDKWIKIRQRVLGLPVKKAVHTEASYGASLLALKGAKQNSGL.

The transit peptide at 1 to 38 directs the protein to the chloroplast; it reads MLILRQFQISSFELFQSPKQTGFYSSSRSVPLPRTRFY. Residues aspartate 60, 64–67, and aspartate 278 each bind substrate; that span reads SGGR. Residues serine 300, glycine 338, and 433–437 contribute to the ATP site; that span reads GGAKN.

Belongs to the FGGY kinase family. Requires a divalent metal cation as cofactor.

It is found in the plastid. It localises to the chloroplast. The catalysed reaction is D-ribulose + ATP = D-ribulose 5-phosphate + ADP + H(+). Exhibits ATP hydrolysis without substrate. Can phosphorylate D-ribulose with low efficiency. The chain is D-ribulose kinase from Arabidopsis thaliana (Mouse-ear cress).